A 721-amino-acid chain; its full sequence is MDAVIAPRHEDCRDVERRAEPLPANAPLPMPVQSLLQSPRAAAVRSPAAWRRVLIMVATAVLSAAGIYEMYQVLQVGGITVLEGVVLVLFAALFAWVALSFVSALAGFTVLCCGWRDDVGISTDGSLPSVSSRIAMLLPTYNEDAPVVFARLQATRQSVDETGRGAQFDWFVLSDSTDPSVWIDEERCYAELAATHDRLYYRHRPHNTARKSGNIADWVERFGGAYDFMVILDADSVMTGDVLVRVAAAMETNSDVGLIQTLPVVVQARTLFARVQQFAGSIYGPMIAAGTAWWHGSESNYWGHNAIIRVSAFAGSAGLPTLAGRKPFGGEILSHDFVEAALMRRAGWRIHLAPTLRGSYEECPPSLLDFAARDRRWCQGNLQHGKLLTARGLHWVSRLHFLTGIGAYLTAPMWLAFLIAGILISLQAQFVRPEYFPKDFSLFPIWPAQDPVRAAWVFAGTMGLLILPKLLALFLVLIRSDTRRRFGGGLRTFGGVLLETMISALTAPVMMVFQSTAVIEILLGRDAGWQVQHRGDGAIPLREVVRRYALPTALGTTMAIGAWLVSWPLLLWMTPVIVGLLLAIPVALLTTRASRSRPLLMMTPEQIDPPAILAQVHALADRLCPANQTTDPLSALRGDRRLRELHLAALAFHPPRRRGRIDPHLATARVLIDDAESYSEAAGWLGPREIRAVLGDRETLQRLLQLSGEHAQLAVGSEPSG.

Helical transmembrane passes span 53–75 (VLIM…QVLQ), 85–107 (VVLV…ALAG), 404–426 (GIGA…LISL), 456–478 (WVFA…LVLI), 490–512 (LRTF…VMMV), and 567–589 (WPLL…VALL).

This sequence belongs to the glycosyltransferase 2 family. OpgH subfamily.

The protein resides in the cell inner membrane. It participates in glycan metabolism; osmoregulated periplasmic glucan (OPG) biosynthesis. Functionally, involved in the biosynthesis of osmoregulated periplasmic glucans (OPGs). The chain is Glucans biosynthesis glucosyltransferase H from Rhodopseudomonas palustris (strain ATCC BAA-98 / CGA009).